Here is a 260-residue protein sequence, read N- to C-terminus: 14-3-3-like protein (260 aa).

A disordered region spans residues 240-260 (DMQDDGGDEIKEAAPKPDEQY). The span at 247–260 (DEIKEAAPKPDEQY) shows a compositional bias: basic and acidic residues.

This sequence belongs to the 14-3-3 family.

This Oenothera elata subsp. hookeri (Hooker's evening primrose) protein is 14-3-3-like protein.